Here is a 443-residue protein sequence, read N- to C-terminus: ATP-dependent protease ATPase subunit HslU (443 aa).

ATP-binding positions include Ile20, 62-67 (GVGKTE), Asp255, Glu321, and Arg393.

Belongs to the ClpX chaperone family. HslU subfamily. A double ring-shaped homohexamer of HslV is capped on each side by a ring-shaped HslU homohexamer. The assembly of the HslU/HslV complex is dependent on binding of ATP.

The protein localises to the cytoplasm. Its function is as follows. ATPase subunit of a proteasome-like degradation complex; this subunit has chaperone activity. The binding of ATP and its subsequent hydrolysis by HslU are essential for unfolding of protein substrates subsequently hydrolyzed by HslV. HslU recognizes the N-terminal part of its protein substrates and unfolds these before they are guided to HslV for hydrolysis. This chain is ATP-dependent protease ATPase subunit HslU, found in Helicobacter pylori (strain G27).